A 150-amino-acid chain; its full sequence is Large ribosomal subunit protein bL9 (150 aa).

It belongs to the bacterial ribosomal protein bL9 family.

Functionally, binds to the 23S rRNA. This chain is Large ribosomal subunit protein bL9, found in Serratia proteamaculans (strain 568).